We begin with the raw amino-acid sequence, 575 residues long: Dihydroxy-acid dehydratase (575 aa).

The disordered stretch occupies residues 1–25 (MPTTDSARAADIKQPDIKPRSRDVT). Over residues 8–25 (RAADIKQPDIKPRSRDVT) the composition is skewed to basic and acidic residues. Position 64 (cysteine 64) interacts with [2Fe-2S] cluster. Position 96 (aspartate 96) interacts with Mg(2+). Cysteine 137 is a binding site for [2Fe-2S] cluster. Residues aspartate 138 and lysine 139 each coordinate Mg(2+). Lysine 139 carries the N6-carboxylysine modification. Cysteine 214 contacts [2Fe-2S] cluster. Glutamate 465 contributes to the Mg(2+) binding site. Serine 491 (proton acceptor) is an active-site residue.

Belongs to the IlvD/Edd family. In terms of assembly, homodimer. Requires [2Fe-2S] cluster as cofactor. Mg(2+) is required as a cofactor.

It carries out the reaction (2R)-2,3-dihydroxy-3-methylbutanoate = 3-methyl-2-oxobutanoate + H2O. It catalyses the reaction (2R,3R)-2,3-dihydroxy-3-methylpentanoate = (S)-3-methyl-2-oxopentanoate + H2O. It participates in amino-acid biosynthesis; L-isoleucine biosynthesis; L-isoleucine from 2-oxobutanoate: step 3/4. It functions in the pathway amino-acid biosynthesis; L-valine biosynthesis; L-valine from pyruvate: step 3/4. Functions in the biosynthesis of branched-chain amino acids. Catalyzes the dehydration of (2R,3R)-2,3-dihydroxy-3-methylpentanoate (2,3-dihydroxy-3-methylvalerate) into 2-oxo-3-methylpentanoate (2-oxo-3-methylvalerate) and of (2R)-2,3-dihydroxy-3-methylbutanoate (2,3-dihydroxyisovalerate) into 2-oxo-3-methylbutanoate (2-oxoisovalerate), the penultimate precursor to L-isoleucine and L-valine, respectively. This Mycolicibacterium paratuberculosis (strain ATCC BAA-968 / K-10) (Mycobacterium paratuberculosis) protein is Dihydroxy-acid dehydratase.